A 321-amino-acid polypeptide reads, in one-letter code: Lipoyl synthase (321 aa).

7 residues coordinate [4Fe-4S] cluster: Cys-68, Cys-73, Cys-79, Cys-94, Cys-98, Cys-101, and Ser-308. A Radical SAM core domain is found at 80 to 297 (FNHGTATFMI…KAEAMAMGFT (218 aa)).

It belongs to the radical SAM superfamily. Lipoyl synthase family. [4Fe-4S] cluster is required as a cofactor.

It localises to the cytoplasm. The enzyme catalyses [[Fe-S] cluster scaffold protein carrying a second [4Fe-4S](2+) cluster] + N(6)-octanoyl-L-lysyl-[protein] + 2 oxidized [2Fe-2S]-[ferredoxin] + 2 S-adenosyl-L-methionine + 4 H(+) = [[Fe-S] cluster scaffold protein] + N(6)-[(R)-dihydrolipoyl]-L-lysyl-[protein] + 4 Fe(3+) + 2 hydrogen sulfide + 2 5'-deoxyadenosine + 2 L-methionine + 2 reduced [2Fe-2S]-[ferredoxin]. It participates in protein modification; protein lipoylation via endogenous pathway; protein N(6)-(lipoyl)lysine from octanoyl-[acyl-carrier-protein]: step 2/2. Its function is as follows. Catalyzes the radical-mediated insertion of two sulfur atoms into the C-6 and C-8 positions of the octanoyl moiety bound to the lipoyl domains of lipoate-dependent enzymes, thereby converting the octanoylated domains into lipoylated derivatives. This chain is Lipoyl synthase, found in Pectobacterium atrosepticum (strain SCRI 1043 / ATCC BAA-672) (Erwinia carotovora subsp. atroseptica).